Here is a 66-residue protein sequence, read N- to C-terminus: Prophage transcriptional regulatory protein (66 aa).

This chain is Prophage transcriptional regulatory protein (croE), found in Escherichia coli (strain K12).